A 116-amino-acid polypeptide reads, in one-letter code: Protein alpha-2 (116 aa).

The sequence is that of Protein alpha-2 (alpha) from Bos taurus (Bovine).